Reading from the N-terminus, the 331-residue chain is Ferredoxin--NADP reductase 2 (331 aa).

FAD is bound by residues glutamate 37, glutamine 45, tyrosine 50, valine 90, phenylalanine 124, aspartate 286, and threonine 327.

This sequence belongs to the ferredoxin--NADP reductase type 2 family. Homodimer. It depends on FAD as a cofactor.

It carries out the reaction 2 reduced [2Fe-2S]-[ferredoxin] + NADP(+) + H(+) = 2 oxidized [2Fe-2S]-[ferredoxin] + NADPH. This Listeria monocytogenes serotype 4b (strain F2365) protein is Ferredoxin--NADP reductase 2.